A 357-amino-acid polypeptide reads, in one-letter code: N-acetyl-gamma-glutamyl-phosphate reductase (357 aa).

Residue Cys160 is part of the active site.

It belongs to the NAGSA dehydrogenase family. Type 1 subfamily.

The protein localises to the cytoplasm. It carries out the reaction N-acetyl-L-glutamate 5-semialdehyde + phosphate + NADP(+) = N-acetyl-L-glutamyl 5-phosphate + NADPH + H(+). Its pathway is amino-acid biosynthesis; L-arginine biosynthesis; N(2)-acetyl-L-ornithine from L-glutamate: step 3/4. Catalyzes the NADPH-dependent reduction of N-acetyl-5-glutamyl phosphate to yield N-acetyl-L-glutamate 5-semialdehyde. The polypeptide is N-acetyl-gamma-glutamyl-phosphate reductase (Synechococcus sp. (strain CC9605)).